The sequence spans 112 residues: Signal peptidase complex-like protein DTM1 (112 aa).

The first 25 residues, 1-25 (MGRDEMLRRSLVALAAAVVVTGVVT), serve as a signal peptide directing secretion. 2 consecutive transmembrane segments (helical) span residues 33-53 (ATYG…WEFF) and 92-112 (MAML…YVSS).

Belongs to the SPCS1 family.

The protein resides in the endoplasmic reticulum membrane. In terms of biological role, functions in tapetum development during early meiosis. May play a role in the endoplasmic reticulum (ER) membrane in the early stages of tapetum development in anthers. Seems to function after MSP1 and before UDT1. In Oryza sativa subsp. japonica (Rice), this protein is Signal peptidase complex-like protein DTM1.